The following is a 227-amino-acid chain: Small ribosomal subunit protein uS3 (227 aa).

The KH type-2 domain maps to 39–107; it reads VRQLLQKRLK…PVHITIEEVR (69 aa).

This sequence belongs to the universal ribosomal protein uS3 family. In terms of assembly, part of the 30S ribosomal subunit. Forms a tight complex with proteins S10 and S14.

Binds the lower part of the 30S subunit head. Binds mRNA in the 70S ribosome, positioning it for translation. In Coxiella burnetii (strain CbuK_Q154) (Coxiella burnetii (strain Q154)), this protein is Small ribosomal subunit protein uS3.